The chain runs to 342 residues: Ribosomal RNA small subunit methyltransferase C (342 aa).

Belongs to the methyltransferase superfamily. RsmC family. In terms of assembly, monomer.

It localises to the cytoplasm. The catalysed reaction is guanosine(1207) in 16S rRNA + S-adenosyl-L-methionine = N(2)-methylguanosine(1207) in 16S rRNA + S-adenosyl-L-homocysteine + H(+). Its function is as follows. Specifically methylates the guanine in position 1207 of 16S rRNA in the 30S particle. The sequence is that of Ribosomal RNA small subunit methyltransferase C from Shewanella sp. (strain MR-7).